A 281-amino-acid polypeptide reads, in one-letter code: Large ribosomal subunit protein uL2 (281 aa).

The interval 223–281 (VRGSVMNPVDHPHGGGEGKQPVGRKSPLTPWGKIALGVKTRKTKKSSNKLILRRRKDAK) is disordered. Over residues 261-281 (KTRKTKKSSNKLILRRRKDAK) the composition is skewed to basic residues.

The protein belongs to the universal ribosomal protein uL2 family. In terms of assembly, part of the 50S ribosomal subunit. Forms a bridge to the 30S subunit in the 70S ribosome.

Its function is as follows. One of the primary rRNA binding proteins. Required for association of the 30S and 50S subunits to form the 70S ribosome, for tRNA binding and peptide bond formation. It has been suggested to have peptidyltransferase activity; this is somewhat controversial. Makes several contacts with the 16S rRNA in the 70S ribosome. The polypeptide is Large ribosomal subunit protein uL2 (Mycoplasmopsis synoviae (strain 53) (Mycoplasma synoviae)).